A 450-amino-acid polypeptide reads, in one-letter code: Folate synthesis bifunctional protein (450 aa).

The HPPK stretch occupies residues 1–166 (MTTWNFVCLG…TFAELAAIYP (166 aa)). Positions 180–441 (TQIMGIVNVT…QVEGNRRVLA (262 aa)) constitute a Pterin-binding domain. Residues 182–450 (IMGIVNVTDD…AAAAWSGMPV (269 aa)) form a DHPS region. Asparagine 187 is a Mg(2+) binding site. Residues threonine 227, aspartate 267, asparagine 287, aspartate 358, lysine 395, and 429–431 (RVH) contribute to the (7,8-dihydropterin-6-yl)methyl diphosphate site.

This sequence in the C-terminal section; belongs to the DHPS family. The protein in the N-terminal section; belongs to the HPPK family. Mg(2+) serves as cofactor.

The enzyme catalyses 6-hydroxymethyl-7,8-dihydropterin + ATP = (7,8-dihydropterin-6-yl)methyl diphosphate + AMP + H(+). It catalyses the reaction (7,8-dihydropterin-6-yl)methyl diphosphate + 4-aminobenzoate = 7,8-dihydropteroate + diphosphate. It functions in the pathway cofactor biosynthesis; tetrahydrofolate biosynthesis; 2-amino-4-hydroxy-6-hydroxymethyl-7,8-dihydropteridine diphosphate from 7,8-dihydroneopterin triphosphate: step 4/4. It participates in cofactor biosynthesis; tetrahydrofolate biosynthesis; 7,8-dihydrofolate from 2-amino-4-hydroxy-6-hydroxymethyl-7,8-dihydropteridine diphosphate and 4-aminobenzoate: step 1/2. The polypeptide is Folate synthesis bifunctional protein (folKP) (Chlamydia muridarum (strain MoPn / Nigg)).